Consider the following 618-residue polypeptide: Grainyhead-like protein 1 homolog (618 aa).

The tract at residues 1–91 (MTQEYDNKRP…EVEHPEPDHS (91 aa)) is transcription activation. Positions 74–92 (RRSSTAKPEVEHPEPDHSK) are enriched in basic and acidic residues. Residues 74 to 94 (RRSSTAKPEVEHPEPDHSKRN) are disordered. Phosphothreonine is present on Thr208. One can recognise a Grh/CP2 DB domain in the interval 248–474 (SGNNFEYTLE…DLDTQPVLFI (227 aa)). Interaction with DNA stretches follow at residues 380–389 (TDFSSQKGVK) and 427–430 (RKIR).

This sequence belongs to the grh/CP2 family. Grainyhead subfamily. Binds DNA as homodimer. Homodimer, also forms heterodimers with GRHL2 or GRHL3. Methylation at Arg-9 and Lys-116 may be involved in regulating transcriptional activation.

Its subcellular location is the nucleus. Transcription factor involved in epithelial development. Binds directly to the consensus DNA sequence 5'-AACCGGTT-3'. Important regulator of DSG1 in the context of hair anchorage and epidermal differentiation, participates in the maintenance of the skin barrier. There is no genetic interaction with GRHL3, nor functional cooperativity due to diverse target gene selectivity during epithelia development. May play a role in regulating glucose homeostasis and insulin signaling. This is Grainyhead-like protein 1 homolog (GRHL1) from Pongo abelii (Sumatran orangutan).